Reading from the N-terminus, the 447-residue chain is Na(+)-translocating NADH-quinone reductase subunit A (447 aa).

This sequence belongs to the NqrA family. In terms of assembly, composed of six subunits; NqrA, NqrB, NqrC, NqrD, NqrE and NqrF.

It catalyses the reaction a ubiquinone + n Na(+)(in) + NADH + H(+) = a ubiquinol + n Na(+)(out) + NAD(+). NQR complex catalyzes the reduction of ubiquinone-1 to ubiquinol by two successive reactions, coupled with the transport of Na(+) ions from the cytoplasm to the periplasm. NqrA to NqrE are probably involved in the second step, the conversion of ubisemiquinone to ubiquinol. This chain is Na(+)-translocating NADH-quinone reductase subunit A, found in Klebsiella pneumoniae (strain 342).